A 244-amino-acid chain; its full sequence is ATP synthase subunit a (244 aa).

Transmembrane regions (helical) follow at residues 17 to 37 (LSNV…AVLT), 74 to 94 (PFLA…MLGL), 112 to 132 (DPAI…YYGV), 148 to 168 (IPLL…TLGL), 171 to 191 (YGNI…ATNF), 196 to 216 (IALG…WQAF), and 217 to 237 (SLFV…VYIS).

The protein belongs to the ATPase A chain family. As to quaternary structure, F-type ATPases have 2 components, CF(1) - the catalytic core - and CF(0) - the membrane proton channel. CF(1) has five subunits: alpha(3), beta(3), gamma(1), delta(1), epsilon(1). CF(0) has three main subunits: a(1), b(2) and c(9-12). The alpha and beta chains form an alternating ring which encloses part of the gamma chain. CF(1) is attached to CF(0) by a central stalk formed by the gamma and epsilon chains, while a peripheral stalk is formed by the delta and b chains.

The protein resides in the cell membrane. In terms of biological role, key component of the proton channel; it plays a direct role in the translocation of protons across the membrane. The protein is ATP synthase subunit a of Bacillus pumilus (strain SAFR-032).